A 318-amino-acid polypeptide reads, in one-letter code: Galactose-1-phosphate uridylyltransferase (318 aa).

Cysteine 32, cysteine 35, and histidine 90 together coordinate Zn(2+). UDP-alpha-D-glucose is bound at residue asparagine 130. Histidine 141 contacts Zn(2+). Histidine 143 acts as the Tele-UMP-histidine intermediate in catalysis. Glutamine 145 lines the UDP-alpha-D-glucose pocket.

This sequence belongs to the galactose-1-phosphate uridylyltransferase type 1 family. Zn(2+) is required as a cofactor.

The catalysed reaction is alpha-D-galactose 1-phosphate + UDP-alpha-D-glucose = alpha-D-glucose 1-phosphate + UDP-alpha-D-galactose. It functions in the pathway carbohydrate metabolism; galactose metabolism. This Thermotoga maritima (strain ATCC 43589 / DSM 3109 / JCM 10099 / NBRC 100826 / MSB8) protein is Galactose-1-phosphate uridylyltransferase (galT).